Reading from the N-terminus, the 398-residue chain is Nicotinate phosphoribosyltransferase (398 aa).

Position 214 is a phosphohistidine; by autocatalysis (histidine 214).

It belongs to the NAPRTase family. Transiently phosphorylated on a His residue during the reaction cycle. Phosphorylation strongly increases the affinity for substrates and increases the rate of nicotinate D-ribonucleotide production. Dephosphorylation regenerates the low-affinity form of the enzyme, leading to product release.

It carries out the reaction nicotinate + 5-phospho-alpha-D-ribose 1-diphosphate + ATP + H2O = nicotinate beta-D-ribonucleotide + ADP + phosphate + diphosphate. Its pathway is cofactor biosynthesis; NAD(+) biosynthesis; nicotinate D-ribonucleotide from nicotinate: step 1/1. In terms of biological role, catalyzes the synthesis of beta-nicotinate D-ribonucleotide from nicotinate and 5-phospho-D-ribose 1-phosphate at the expense of ATP. The polypeptide is Nicotinate phosphoribosyltransferase (Xanthomonas campestris pv. campestris (strain 8004)).